The following is a 312-amino-acid chain: MNMDEEASLESYFDQTIAGSSDYIFEGDLGLQGSTSQLQDSSFLSSLASQEKDLTEDLDLSFLPDELSTQDEPSQVEKESKNEDSGIYTDCPQKESTQADIDTSNSAQNTSQFNLPMTPMTPMTPMTPVAESSGIIPQLQNIVSTVNLACPLDLKSIALQARNAEYNPKRFAAVIMRIREPRTTALIFSSGKMVCTGAKSEEQSRLAARKYARVVQKLGFPAKFLDFKIQNMVGSCDVCFPIRLEGLVLTHQQFSSYEPELFPGLIYRMVKPRIVLLIFVSGKVVLTGAKERSEIYEAFENIYPILKGFRKQ.

The interval 65 to 115 is disordered; that stretch reads DELSTQDEPSQVEKESKNEDSGIYTDCPQKESTQADIDTSNSAQNTSQFNL. The span at 75-84 shows a compositional bias: basic and acidic residues; it reads QVEKESKNED. Residues 94–115 are compositionally biased toward polar residues; the sequence is KESTQADIDTSNSAQNTSQFNL.

This sequence belongs to the TBP family. In adults, expressed in the gonads, with expression much higher in the ovary than the testis (at protein level). Shows a small amount of expression in other adult organs, including the brain and kidney. Embryonic expression is mostly ubiquitous except in early gastrula embryos where expression is asymmetric.

It localises to the nucleus. Its function is as follows. TATA box-binding transcription factor. Members of the TBP family are differentially required to regulate transcription and development during early embryogenesis. Commits mesoderm to the hematopoietic lineage during hemopoiesis, acting via mespa. Binds to the mespa promoter. In Danio rerio (Zebrafish), this protein is TATA box-binding protein-like 2.